A 1976-amino-acid chain; its full sequence is Myosin-10 (1976 aa).

Arginine 18 carries the omega-N-methylarginine modification. Positions 31 to 81 constitute a Myosin N-terminal SH3-like domain; the sequence is TAKKLVWIPSERHGFEAASIKEERGDEVMVELAENGKKAMVNKDDIQKMNP. In terms of domain architecture, Myosin motor spans 85–783; the sequence is SKVEDMAELT…VLAHLEEERD (699 aa). 178 to 185 contacts ATP; it reads GESGAGKT. Lysine 442 is subject to N6-acetyllysine. The actin-binding stretch occupies residues 661–683; the sequence is LTKLMATLRNTNPNFVRCIIPNH. The IQ domain maps to 786–815; sequence ITDIIIFFQAVCRGYLARKAFAKKQQQLSA. Residues 845-1976 adopt a coiled-coil conformation; it reads LQVTRQEEEL…VNDTQPPQSE (1132 aa). Residues 1125–1175 form a disordered region; the sequence is EDFESEKASRNKAEKQKRDLSEELEALKTELEDTLDTTAAQQELRTKREQE. Positions 1129–1155 are enriched in basic and acidic residues; the sequence is SEKASRNKAEKQKRDLSEELEALKTEL. Serine 1145 carries the phosphoserine modification. N6-acetyllysine is present on residues lysine 1241, lysine 1301, and lysine 1645. Disordered regions lie at residues 1697-1718 and 1874-1976; these read ASSE…DEIA and KANA…PQSE. The span at 1698–1708 shows a compositional bias: basic and acidic residues; the sequence is SSERARRHAEQ. Residue arginine 1930 is modified to Omega-N-methylarginine. Phosphoserine is present on residues serine 1935, serine 1937, serine 1938, and serine 1939. An Omega-N-methylarginine modification is found at arginine 1940. 2 positions are modified to phosphoserine: serine 1952 and serine 1956. Position 1960 is a phosphothreonine (threonine 1960). The segment covering 1967–1976 has biased composition (polar residues); the sequence is VNDTQPPQSE. The residue at position 1975 (serine 1975) is a Phosphoserine.

This sequence belongs to the TRAFAC class myosin-kinesin ATPase superfamily. Myosin family. Myosin is a hexameric protein that consists of 2 heavy chain subunits (MHC), 2 alkali light chain subunits (MLC) and 2 regulatory light chain subunits (MLC-2). Interacts with PLEKHG6. Interacts with ECPAS. Interacts with LARP6. Interacts with MCC. Interacts with KIF26B. Interacts with CFAP95. Post-translationally, phosphorylated by ABL2. In terms of tissue distribution, in newborn kidney, expressed in the mesenchyme and ureteric buds.

It is found in the cell projection. Its subcellular location is the lamellipodium. Involved with LARP6 in the stabilization of type I collagen mRNAs for CO1A1 and CO1A2. During cell spreading, plays an important role in cytoskeleton reorganization, focal contacts formation (in the central part but not the margins of spreading cells), and lamellipodial extension; this function is mechanically antagonized by MYH9. Cellular myosin that appears to play a role in cytokinesis, cell shape, and specialized functions such as secretion and capping. In Mus musculus (Mouse), this protein is Myosin-10 (Myh10).